A 341-amino-acid polypeptide reads, in one-letter code: Ribosomal RNA small subunit methyltransferase H (341 aa).

S-adenosyl-L-methionine-binding positions include 47–49 (GGY), Asp64, Phe91, Asp109, and Gln116.

The protein belongs to the methyltransferase superfamily. RsmH family.

The protein localises to the cytoplasm. The catalysed reaction is cytidine(1402) in 16S rRNA + S-adenosyl-L-methionine = N(4)-methylcytidine(1402) in 16S rRNA + S-adenosyl-L-homocysteine + H(+). Its function is as follows. Specifically methylates the N4 position of cytidine in position 1402 (C1402) of 16S rRNA. The sequence is that of Ribosomal RNA small subunit methyltransferase H from Rhizobium johnstonii (strain DSM 114642 / LMG 32736 / 3841) (Rhizobium leguminosarum bv. viciae).